Here is a 354-residue protein sequence, read N- to C-terminus: Tryptophan--tRNA ligase (354 aa).

Residues 13-15 (QPT) and 21-22 (GN) contribute to the ATP site. The 'HIGH' region signature appears at 14 to 22 (PTGNLHLGN). D137 lines the L-tryptophan pocket. Residues 149–151 (GDD), V208, and 217–221 (KMSKS) each bind ATP. The 'KMSKS' region signature appears at 217 to 221 (KMSKS).

The protein belongs to the class-I aminoacyl-tRNA synthetase family. In terms of assembly, homodimer.

It is found in the cytoplasm. The catalysed reaction is tRNA(Trp) + L-tryptophan + ATP = L-tryptophyl-tRNA(Trp) + AMP + diphosphate + H(+). Functionally, catalyzes the attachment of tryptophan to tRNA(Trp). The protein is Tryptophan--tRNA ligase of Agrobacterium fabrum (strain C58 / ATCC 33970) (Agrobacterium tumefaciens (strain C58)).